Consider the following 594-residue polypeptide: NADH-quinone oxidoreductase subunit C/D (594 aa).

The segment at 1–185 is NADH dehydrogenase I subunit C; the sequence is MTTGSALYIP…DPFSLNLAKQ (185 aa). The NADH dehydrogenase I subunit D stretch occupies residues 209 to 594; sequence DYMFLNLGPN…IDFVMADVDR (386 aa).

This sequence in the N-terminal section; belongs to the complex I 30 kDa subunit family. It in the C-terminal section; belongs to the complex I 49 kDa subunit family. As to quaternary structure, NDH-1 is composed of 13 different subunits. Subunits NuoB, CD, E, F, and G constitute the peripheral sector of the complex.

It is found in the cell inner membrane. It carries out the reaction a quinone + NADH + 5 H(+)(in) = a quinol + NAD(+) + 4 H(+)(out). Its function is as follows. NDH-1 shuttles electrons from NADH, via FMN and iron-sulfur (Fe-S) centers, to quinones in the respiratory chain. The immediate electron acceptor for the enzyme in this species is believed to be ubiquinone. Couples the redox reaction to proton translocation (for every two electrons transferred, four hydrogen ions are translocated across the cytoplasmic membrane), and thus conserves the redox energy in a proton gradient. This chain is NADH-quinone oxidoreductase subunit C/D, found in Pseudomonas fluorescens (strain Pf0-1).